We begin with the raw amino-acid sequence, 491 residues long: Glutamyl-tRNA(Gln) amidotransferase subunit A (491 aa).

Catalysis depends on charge relay system residues K79 and S158. The active-site Acyl-ester intermediate is the S182.

The protein belongs to the amidase family. GatA subfamily. Heterotrimer of A, B and C subunits.

The catalysed reaction is L-glutamyl-tRNA(Gln) + L-glutamine + ATP + H2O = L-glutaminyl-tRNA(Gln) + L-glutamate + ADP + phosphate + H(+). Allows the formation of correctly charged Gln-tRNA(Gln) through the transamidation of misacylated Glu-tRNA(Gln) in organisms which lack glutaminyl-tRNA synthetase. The reaction takes place in the presence of glutamine and ATP through an activated gamma-phospho-Glu-tRNA(Gln). The polypeptide is Glutamyl-tRNA(Gln) amidotransferase subunit A (Anaplasma phagocytophilum (strain HZ)).